A 202-amino-acid chain; its full sequence is Urease accessory protein UreG (202 aa).

Residue 13 to 20 (GPVGAGKT) coordinates GTP.

It belongs to the SIMIBI class G3E GTPase family. UreG subfamily. Homodimer. UreD, UreF and UreG form a complex that acts as a GTP-hydrolysis-dependent molecular chaperone, activating the urease apoprotein by helping to assemble the nickel containing metallocenter of UreC. The UreE protein probably delivers the nickel.

It is found in the cytoplasm. In terms of biological role, facilitates the functional incorporation of the urease nickel metallocenter. This process requires GTP hydrolysis, probably effectuated by UreG. The polypeptide is Urease accessory protein UreG (Dinoroseobacter shibae (strain DSM 16493 / NCIMB 14021 / DFL 12)).